A 317-amino-acid chain; its full sequence is Acetyl-coenzyme A carboxylase carboxyl transferase subunit alpha (317 aa).

A CoA carboxyltransferase C-terminal domain is found at 43–293 (RVRESMADIY…GDVISNALGE (251 aa)).

This sequence belongs to the AccA family. In terms of assembly, acetyl-CoA carboxylase is a heterohexamer composed of biotin carboxyl carrier protein (AccB), biotin carboxylase (AccC) and two subunits each of ACCase subunit alpha (AccA) and ACCase subunit beta (AccD).

It localises to the cytoplasm. The catalysed reaction is N(6)-carboxybiotinyl-L-lysyl-[protein] + acetyl-CoA = N(6)-biotinyl-L-lysyl-[protein] + malonyl-CoA. Its pathway is lipid metabolism; malonyl-CoA biosynthesis; malonyl-CoA from acetyl-CoA: step 1/1. In terms of biological role, component of the acetyl coenzyme A carboxylase (ACC) complex. First, biotin carboxylase catalyzes the carboxylation of biotin on its carrier protein (BCCP) and then the CO(2) group is transferred by the carboxyltransferase to acetyl-CoA to form malonyl-CoA. In Rhizobium rhizogenes (strain K84 / ATCC BAA-868) (Agrobacterium radiobacter), this protein is Acetyl-coenzyme A carboxylase carboxyl transferase subunit alpha.